The chain runs to 202 residues: Large ribosomal subunit protein bL25 (202 aa).

The segment at glutamate 182–glutamate 202 is disordered. The segment covering valine 183 to glutamate 202 has biased composition (acidic residues).

Belongs to the bacterial ribosomal protein bL25 family. CTC subfamily. As to quaternary structure, part of the 50S ribosomal subunit; part of the 5S rRNA/L5/L18/L25 subcomplex. Contacts the 5S rRNA. Binds to the 5S rRNA independently of L5 and L18.

Functionally, this is one of the proteins that binds to the 5S RNA in the ribosome where it forms part of the central protuberance. This Corynebacterium glutamicum (strain R) protein is Large ribosomal subunit protein bL25.